The sequence spans 207 residues: Thaumatin-like protein 1 (207 aa).

8 cysteine pairs are disulfide-bonded: Cys-9-Cys-202, Cys-50-Cys-60, Cys-65-Cys-71, Cys-117-Cys-191, Cys-122-Cys-174, Cys-130-Cys-140, Cys-144-Cys-153, and Cys-154-Cys-161.

Belongs to the thaumatin family. As to quaternary structure, monomer. In terms of processing, not glycosylated.

It is found in the secreted. Acidic thaumatin-like protein. Exhibits weak beta-1,3-glucanase activity with laminarin as substrate. This Manilkara zapota (Sapodilla plum) protein is Thaumatin-like protein 1 (TLP1).